Reading from the N-terminus, the 398-residue chain is Argininosuccinate synthase (398 aa).

8–16 is a binding site for ATP; sequence AYSGGLDTS. Residue Y87 coordinates L-citrulline. Position 117 (G117) interacts with ATP. Residues T119, N123, and D124 each coordinate L-aspartate. An L-citrulline-binding site is contributed by N123. The L-citrulline site is built by R127, S175, E260, and Y272.

The protein belongs to the argininosuccinate synthase family. Type 1 subfamily. Homotetramer.

Its subcellular location is the cytoplasm. It carries out the reaction L-citrulline + L-aspartate + ATP = 2-(N(omega)-L-arginino)succinate + AMP + diphosphate + H(+). It participates in amino-acid biosynthesis; L-arginine biosynthesis; L-arginine from L-ornithine and carbamoyl phosphate: step 2/3. The protein is Argininosuccinate synthase of Mycobacterium marinum (strain ATCC BAA-535 / M).